Reading from the N-terminus, the 145-residue chain is Leptin (145 aa).

A signal peptide spans 1–12; it reads LWLWPYLFFIEA.

The protein belongs to the leptin family.

Its subcellular location is the secreted. In terms of biological role, key player in the regulation of energy balance and body weight control. Once released into the circulation, has central and peripheral effects by binding LEPR, found in many tissues, which results in the activation of several major signaling pathways. In the hypothalamus, acts as an appetite-regulating factor that induces a decrease in food intake and an increase in energy consumption by inducing anorexinogenic factors and suppressing orexigenic neuropeptides, also regulates bone mass and secretion of hypothalamo-pituitary-adrenal hormones. In the periphery, increases basal metabolism, influences reproductive function, regulates pancreatic beta-cell function and insulin secretion, is pro-angiogenic for endothelial cell and affects innate and adaptive immunity. In the arcuate nucleus of the hypothalamus, activates by depolarization POMC neurons inducing FOS and SOCS3 expression to release anorexigenic peptides and inhibits by hyperpolarization NPY neurons inducing SOCS3 with a consequent reduction on release of orexigenic peptides. In addition to its known satiety inducing effect, has a modulatory role in nutrient absorption. In the intestine, reduces glucose absorption by enterocytes by activating PKC and leading to a sequential activation of p38, PI3K and ERK signaling pathways which exerts an inhibitory effect on glucose absorption. Acts as a growth factor on certain tissues, through the activation of different signaling pathways increases expression of genes involved in cell cycle regulation such as CCND1, via JAK2-STAT3 pathway, or VEGFA, via MAPK1/3 and PI3K-AKT1 pathways. May also play an apoptotic role via JAK2-STAT3 pathway and up-regulation of BIRC5 expression. Pro-angiogenic, has mitogenic activity on vascular endothelial cells and plays a role in matrix remodeling by regulating the expression of matrix metalloproteinases (MMPs) and tissue inhibitors of metalloproteinases (TIMPs). In innate immunity, modulates the activity and function of neutrophils by increasing chemotaxis and the secretion of oxygen radicals. Increases phagocytosis by macrophages and enhances secretion of pro-inflammatory mediators. Increases cytotoxic ability of NK cells. Plays a pro-inflammatory role, in synergy with IL1B, by inducing NOS2 which promotes the production of IL6, IL8 and Prostaglandin E2, through a signaling pathway that involves JAK2, PI3K, MAP2K1/MEK1 and MAPK14/p38. In adaptive immunity, promotes the switch of memory T-cells towards T helper-1 cell immune responses. Increases CD4(+)CD25(-) T-cell proliferation and reduces autophagy during TCR (T-cell receptor) stimulation, through MTOR signaling pathway activation and BCL2 up-regulation. The polypeptide is Leptin (LEP) (Equus caballus (Horse)).